The chain runs to 359 residues: MSKSIVLLPGDHVGTEVVAEAVKVLKAIERTTPGTSFSFSTHLIGGAAIDATGVPLPDEALEAAKASDAVLLGAVGGPKWGTGDVRPEQGLLKIRKELGLYANLRPCSFASSKLVDLSPLKREIVEGTDFVVVRELVGGIYFGERKEDDGSGVASDTETYSVPEVERITRMAAFLALQHNPPQTVWSLDKANVLASSRLWRKTVTRVMTEEFPTVPFQHQLIDSAAMILVQKPTKLNGVVLTSNMFGDIISDEASVIPGSLGLLPSASLASLPDTNTAFGLYEPCHGSAPDLPAGKVNPLACILSAAMMLRLSLDNAAAADRIEQAVREVIDSGVATADLGGSSSTGEVGDAIVKALEK.

NAD(+) is bound at residue 77–88 (GPKWGTGDVRPE). Residues Arg-95, Arg-105, Arg-134, and Asp-223 each coordinate substrate. Mg(2+) is bound by residues Asp-223, Asp-248, and Asp-252. 287 to 298 (GSAPDLPAGKVN) is a binding site for NAD(+).

It belongs to the isocitrate and isopropylmalate dehydrogenases family. Homodimer. It depends on Mg(2+) as a cofactor. Mn(2+) serves as cofactor.

Its subcellular location is the cytoplasm. The enzyme catalyses (2R,3S)-3-isopropylmalate + NAD(+) = 4-methyl-2-oxopentanoate + CO2 + NADH. The protein operates within amino-acid biosynthesis; L-leucine biosynthesis; L-leucine from 3-methyl-2-oxobutanoate: step 3/4. In terms of biological role, catalyzes the oxidation of 3-carboxy-2-hydroxy-4-methylpentanoate (3-isopropylmalate) to 3-carboxy-4-methyl-2-oxopentanoate. The product decarboxylates to 4-methyl-2 oxopentanoate. This is 3-isopropylmalate dehydrogenase (LEU2) from Diutina rugosa (Yeast).